The sequence spans 162 residues: Ubiquitin D (162 aa).

Ubiquitin-like domains lie at 3–78 and 87–160; these read SVRT…LKVV and LFLV…THCT.

This sequence belongs to the ubiquitin D family. In terms of assembly, interacts directly with the 26S proteasome. Interacts with NUB1; this interaction facilitates the linking of UBD-conjugated target protein to the proteasome complex and accelerates its own degradation and that of its conjugates. Interacts (via ubiquitin-like 1 domain) with the spindle checkpoint protein MAD2L1 during mitosis. Present in aggresomes of proteasome inhibited cells. Interacts with HDAC6 under proteasome impairment conditions. Forms a thioester with UBA6 in cells stimulated with tumor necrosis factor-alpha (TNFa) and interferon-gamma (IFNg). Interacts with SQSTM1 and TP53/p53. In terms of processing, can be acetylated. As to expression, mostly expressed in thymus and intestine.

It is found in the nucleus. Its subcellular location is the cytoplasm. Functionally, ubiquitin-like protein modifier which can be covalently attached to target proteins and subsequently leads to their degradation by the 26S proteasome, in a NUB1-dependent manner. Conjugation to the target protein is activated by UBA6 via adenylation of its C-terminal glycine. Probably functions as a survival factor. Promotes the expression of the proteasome subunit beta type-9 (PSMB9/LMP2). Regulates TNF-alpha-induced and LPS-mediated activation of the central mediator of innate immunity NF-kappa-B by promoting TNF-alpha-mediated proteasomal degradation of ubiquitinated-I-kappa-B-alpha. Required for TNF-alpha-induced p65 nuclear translocation in renal tubular epithelial cells (RTECs). May be involved in dendritic cell (DC) maturation, the process by which immature dendritic cells differentiate into fully competent antigen-presenting cells that initiate T-cell responses. Mediates mitotic non-disjunction and chromosome instability, in long-term in vitro culture and cancers, by abbreviating mitotic phase and impairing the kinetochore localization of MAD2L1 during the prometaphase stage of the cell cycle. May be involved in the formation of aggresomes when proteasome is saturated or impaired. Mediates apoptosis in a caspase-dependent manner, especially in renal epithelium and tubular cells during renal diseases. The protein is Ubiquitin D (Ubd) of Mus musculus (Mouse).